The primary structure comprises 54 residues: Protein P32 (54 aa).

Residues F4 to I24 form a helical membrane-spanning segment.

It is found in the virion membrane. Its function is as follows. Component of the phage injection machinery. Required for DNA injection in the membrane transformation event. Involved in the formation of the membrane tail tube to connect the virus interior with the host cytosol. Essential for viral infectivity. The protein is Protein P32 (XXXII) of Enterobacteria phage PRD1 (Bacteriophage PRD1).